Consider the following 345-residue polypeptide: Probable deoxyhypusine synthase 2 (345 aa).

K292 functions as the Nucleophile in the catalytic mechanism.

This sequence belongs to the deoxyhypusine synthase family. NAD(+) is required as a cofactor.

It carries out the reaction [eIF5A protein]-L-lysine + spermidine = [eIF5A protein]-deoxyhypusine + propane-1,3-diamine. The protein operates within protein modification; eIF5A hypusination. Catalyzes the NAD-dependent oxidative cleavage of spermidine and the subsequent transfer of the butylamine moiety of spermidine to the epsilon-amino group of a specific lysine residue of the eIF-5A precursor protein to form the intermediate deoxyhypusine residue. The protein is Probable deoxyhypusine synthase 2 (dys2) of Methanosarcina acetivorans (strain ATCC 35395 / DSM 2834 / JCM 12185 / C2A).